We begin with the raw amino-acid sequence, 699 residues long: Elongation factor G (699 aa).

Residues E8–I283 enclose the tr-type G domain. GTP is bound by residues A17–T24, D81–H85, and N135–D138.

The protein belongs to the TRAFAC class translation factor GTPase superfamily. Classic translation factor GTPase family. EF-G/EF-2 subfamily.

Its subcellular location is the cytoplasm. Catalyzes the GTP-dependent ribosomal translocation step during translation elongation. During this step, the ribosome changes from the pre-translocational (PRE) to the post-translocational (POST) state as the newly formed A-site-bound peptidyl-tRNA and P-site-bound deacylated tRNA move to the P and E sites, respectively. Catalyzes the coordinated movement of the two tRNA molecules, the mRNA and conformational changes in the ribosome. The sequence is that of Elongation factor G from Rickettsia conorii (strain ATCC VR-613 / Malish 7).